The sequence spans 48 residues: M-oxotoxin-Ot1b (48 aa).

It localises to the secreted. The protein localises to the target cell membrane. Functionally, disrupts cell membranes, particularly those rich in phosphocholine, through formation of pores. Has antimicrobial activity, hemolytic activity and insecticidal activity. The sequence is that of M-oxotoxin-Ot1b from Oxyopes takobius (Lynx spider).